The chain runs to 430 residues: GTPase Obg (430 aa).

An Obg domain is found at 1–158; sequence MFVDQVTISL…LDVTLELKLL (158 aa). Residues 118–145 are disordered; it reads RGGRGGRGNSRFATPRNPAPDFSENGEP. The OBG-type G domain occupies 159–329; the sequence is ADVGLVGFPS…LLYAIADKLD (171 aa). GTP contacts are provided by residues 165–172, 190–194, 212–215, 282–285, and 310–312; these read GFPSVGKS, FTTIK, DLPG, NKMD, and STI. Residues serine 172 and threonine 192 each coordinate Mg(2+). The OCT domain occupies 352–430; it reads KHTPSQDKFT…ILGGEFEFVE (79 aa).

Belongs to the TRAFAC class OBG-HflX-like GTPase superfamily. OBG GTPase family. In terms of assembly, monomer. The cofactor is Mg(2+).

The protein localises to the cytoplasm. Its function is as follows. An essential GTPase which binds GTP, GDP and possibly (p)ppGpp with moderate affinity, with high nucleotide exchange rates and a fairly low GTP hydrolysis rate. Plays a role in control of the cell cycle, stress response, ribosome biogenesis and in those bacteria that undergo differentiation, in morphogenesis control. This chain is GTPase Obg, found in Staphylococcus haemolyticus (strain JCSC1435).